A 556-amino-acid polypeptide reads, in one-letter code: Formate--tetrahydrofolate ligase (556 aa).

65–72 (TPAGEGKS) contributes to the ATP binding site.

This sequence belongs to the formate--tetrahydrofolate ligase family.

It catalyses the reaction (6S)-5,6,7,8-tetrahydrofolate + formate + ATP = (6R)-10-formyltetrahydrofolate + ADP + phosphate. It participates in one-carbon metabolism; tetrahydrofolate interconversion. In Streptococcus pneumoniae (strain Taiwan19F-14), this protein is Formate--tetrahydrofolate ligase.